A 355-amino-acid chain; its full sequence is Gentisate 1,2-dioxygenase (355 aa).

The region spanning 106–174 is the Cupin type-2 domain; it reads MQLLLPGEWA…GNEPVVWLDV (69 aa).

The protein belongs to the gentisate 1,2-dioxygenase family.

The catalysed reaction is 2,5-dihydroxybenzoate + O2 = 3-maleylpyruvate + H(+). The protein operates within aromatic compound metabolism; naphthalene degradation. Its function is as follows. Catalyzes the oxygen-dependent ring fission of gentisate between the carboxyl and proximal hydroxyl groups at positions 1 and 2 of the aromatic ring to form maleylpyruvate. Can also catalyze oxidation of alkyl- and halogenated gentisates. Exhibits higher affinity for 3-substituted gentisates than for gentisate but has higher activity with gentisate. This Ralstonia sp protein is Gentisate 1,2-dioxygenase.